We begin with the raw amino-acid sequence, 335 residues long: Glyceraldehyde-3-phosphate dehydrogenase (335 aa).

Residues 12-13 (RI), D34, and K79 contribute to the NAD(+) site. Residues 150 to 152 (SCT), T181, 210 to 211 (TG), and R233 each bind D-glyceraldehyde 3-phosphate. C151 functions as the Nucleophile in the catalytic mechanism. N315 serves as a coordination point for NAD(+).

Belongs to the glyceraldehyde-3-phosphate dehydrogenase family. In terms of assembly, homotetramer.

The protein resides in the cytoplasm. The catalysed reaction is D-glyceraldehyde 3-phosphate + phosphate + NAD(+) = (2R)-3-phospho-glyceroyl phosphate + NADH + H(+). It functions in the pathway carbohydrate degradation; glycolysis; pyruvate from D-glyceraldehyde 3-phosphate: step 1/5. This chain is Glyceraldehyde-3-phosphate dehydrogenase (GPD), found in Debaryomyces hansenii (strain ATCC 36239 / CBS 767 / BCRC 21394 / JCM 1990 / NBRC 0083 / IGC 2968) (Yeast).